A 90-amino-acid chain; its full sequence is Small ribosomal subunit protein uS17 (90 aa).

This sequence belongs to the universal ribosomal protein uS17 family. In terms of assembly, part of the 30S ribosomal subunit.

One of the primary rRNA binding proteins, it binds specifically to the 5'-end of 16S ribosomal RNA. The chain is Small ribosomal subunit protein uS17 from Dehalococcoides mccartyi (strain ATCC BAA-2100 / JCM 16839 / KCTC 5957 / BAV1).